Reading from the N-terminus, the 600-residue chain is NADH-quinone oxidoreductase subunit C/D (600 aa).

Positions 1 to 190 (MVNNMTDLTA…SPFELTKAKQ (190 aa)) are NADH dehydrogenase I subunit C. Residues 214-600 (DFMFLNLGPN…IDFVMSDVDR (387 aa)) form an NADH dehydrogenase I subunit D region.

This sequence in the N-terminal section; belongs to the complex I 30 kDa subunit family. The protein in the C-terminal section; belongs to the complex I 49 kDa subunit family. NDH-1 is composed of 13 different subunits. Subunits NuoB, CD, E, F, and G constitute the peripheral sector of the complex.

It is found in the cell inner membrane. The catalysed reaction is a quinone + NADH + 5 H(+)(in) = a quinol + NAD(+) + 4 H(+)(out). In terms of biological role, NDH-1 shuttles electrons from NADH, via FMN and iron-sulfur (Fe-S) centers, to quinones in the respiratory chain. The immediate electron acceptor for the enzyme in this species is believed to be ubiquinone. Couples the redox reaction to proton translocation (for every two electrons transferred, four hydrogen ions are translocated across the cytoplasmic membrane), and thus conserves the redox energy in a proton gradient. The protein is NADH-quinone oxidoreductase subunit C/D of Escherichia coli O6:H1 (strain CFT073 / ATCC 700928 / UPEC).